Here is a 547-residue protein sequence, read N- to C-terminus: T-complex protein 1 subunit gamma (547 aa).

Residue Gly-41 coordinates ADP. Gly-41 is a binding site for ATP. Asp-92 contributes to the Mg(2+) binding site. ADP is bound by residues Gly-93, Thr-94, Thr-95, Ser-96, Thr-161, and Lys-162. Residues Gly-93, Thr-94, and Thr-95 each contribute to the ATP site. Cys-365 and Cys-371 are joined by a disulfide. The ADP site is built by Gly-410, Gly-481, Glu-482, Glu-496, and Lys-501. The ATP site is built by Gly-410 and Gly-481. Glu-496 is a binding site for ATP. Positions 525-534 are enriched in basic and acidic residues; sequence HKKKGEDHGR. Residues 525-547 are disordered; the sequence is HKKKGEDHGRQPAAAPEAPQQAE. Residues 535-547 show a composition bias toward low complexity; that stretch reads QPAAAPEAPQQAE.

This sequence belongs to the TCP-1 chaperonin family. In terms of assembly, component of the chaperonin-containing T-complex (TRiC), a hexadecamer composed of two identical back-to-back stacked rings enclosing a protein folding chamber. Each ring is made up of eight different subunits: TCP1/CCT1, CCT2, CCT3, CCT4, CCT5, CCT6A/CCT6, CCT7, CCT8.

It is found in the cytoplasm. It carries out the reaction ATP + H2O = ADP + phosphate + H(+). Component of the chaperonin-containing T-complex (TRiC), a molecular chaperone complex that assists the folding of actin, tubulin and other proteins upon ATP hydrolysis. In Xenopus laevis (African clawed frog), this protein is T-complex protein 1 subunit gamma (cct3).